The chain runs to 158 residues: Cyclic pyranopterin monophosphate synthase (158 aa).

Substrate contacts are provided by residues 75-77 (LCH) and 113-114 (ME). D128 is a catalytic residue.

The protein belongs to the MoaC family. As to quaternary structure, homohexamer; trimer of dimers.

The enzyme catalyses (8S)-3',8-cyclo-7,8-dihydroguanosine 5'-triphosphate = cyclic pyranopterin phosphate + diphosphate. It functions in the pathway cofactor biosynthesis; molybdopterin biosynthesis. Functionally, catalyzes the conversion of (8S)-3',8-cyclo-7,8-dihydroguanosine 5'-triphosphate to cyclic pyranopterin monophosphate (cPMP). This chain is Cyclic pyranopterin monophosphate synthase, found in Polynucleobacter asymbioticus (strain DSM 18221 / CIP 109841 / QLW-P1DMWA-1) (Polynucleobacter necessarius subsp. asymbioticus).